We begin with the raw amino-acid sequence, 277 residues long: Tryptophan synthase alpha chain (277 aa).

Catalysis depends on proton acceptor residues Glu43 and Glu54.

Belongs to the TrpA family. Tetramer of two alpha and two beta chains.

The catalysed reaction is (1S,2R)-1-C-(indol-3-yl)glycerol 3-phosphate + L-serine = D-glyceraldehyde 3-phosphate + L-tryptophan + H2O. It functions in the pathway amino-acid biosynthesis; L-tryptophan biosynthesis; L-tryptophan from chorismate: step 5/5. The alpha subunit is responsible for the aldol cleavage of indoleglycerol phosphate to indole and glyceraldehyde 3-phosphate. This Haloferax volcanii (strain ATCC 29605 / DSM 3757 / JCM 8879 / NBRC 14742 / NCIMB 2012 / VKM B-1768 / DS2) (Halobacterium volcanii) protein is Tryptophan synthase alpha chain.